The following is a 552-amino-acid chain: MSPPPPPPIWRQLSFSLLLGSFCIALESAAQGNSATDALNILLIIVDDLRPSLGCYGDKLVRSPNIDQLASHSVLFQNAFAQQAVCAPSRVSFLTGRRPDTTRLYDFNSYWRVHSGNFSTIPQYFKENGYVTMSVGKVFHPGISSNHSDDYPYSWSFPPYHPSSEKYENTKTCKGQDGKLHANLLCPVDVADVPEGTLPDKQSTEEAIRLLEKMKTSASPFFLAVGYHKPHIPFRYPKEFQKLYPLENITLAPDPHVPDSLPPVAYNPWMDIREREDVQALNISVPYGPIPEDFQRKIRQSYFASVSYLDTQVGHVLSALDDLRLAHNTIIAFTSDHGWALGEHGEWAKYSNFDVATRVPLMLYVPGRTAPLPAAGQKLFPYRDPFDPASDWMDAGRHTEDLVELVSLFPTLAGLAGLPVPPRCPIPSFHVELCREGQNLQKHLQLHDLEEEPDLFGNPRELIAYSQYPRPADFPQWNSDKPSLNDIKVMGYSIRTVDYRYTVWVGFDPSEFLANFSDIHAGELYFVDSDPLQDHNVYNDSQHGGLLHSLRP.

The signal sequence occupies residues 1 to 29 (MSPPPPPPIWRQLSFSLLLGSFCIALESA). Residues 30–35 (AQGNSA) constitute a propeptide that is removed on maturation. D47, D48, and C86 together coordinate Ca(2+). The active-site Nucleophile is C86. A 3-oxoalanine (Cys) modification is found at C86. Residue N117 is glycosylated (N-linked (GlcNAc...) asparagine). Residue H140 is part of the active site. The N-linked (GlcNAc...) asparagine glycan is linked to N146. C173 and C186 are joined by a disulfide. Residues N248 and N282 are each glycosylated (N-linked (GlcNAc...) asparagine). Ca(2+) contacts are provided by D336 and H337. C424 and C434 form a disulfide bridge. N515 and N539 each carry an N-linked (GlcNAc...) asparagine glycan.

This sequence belongs to the sulfatase family. As to quaternary structure, monomer. The 58-kDa mature form is composed of two chains resulting from proteolitic processing, the 42-kDa chain and the 14-kDa chain that remain stably associated and form the 58-kDa intermediate form which is enzymatically active. Ca(2+) serves as cofactor. In terms of processing, synthesized as a 75-kDa precursor form in the endoplasmic reticulum (ER), and then processed by proteolytic cleavage through various intermediates to yield a 55-kDa mature form, with the release of an 18 kDa polypeptide. The conversion to 3-oxoalanine (also known as C-formylglycine, FGly), of a serine or cysteine residue in prokaryotes and of a cysteine residue in eukaryotes, is critical for catalytic activity. In terms of tissue distribution, found to be expressed in alpha and beta pancreatic cells.

Its subcellular location is the lysosome. It carries out the reaction Hydrolysis of the 2-sulfate groups of the L-iduronate 2-sulfate units of dermatan sulfate, heparan sulfate and heparin.. Its function is as follows. Lysosomal enzyme involved in the degradation pathway of dermatan sulfate and heparan sulfate. The polypeptide is Iduronate 2-sulfatase (Ids) (Mus musculus (Mouse)).